The sequence spans 285 residues: Bifunctional protein FolD (285 aa).

Residues Gly166–Ser168, Ser191, and Ile232 contribute to the NADP(+) site.

The protein belongs to the tetrahydrofolate dehydrogenase/cyclohydrolase family. Homodimer.

It catalyses the reaction (6R)-5,10-methylene-5,6,7,8-tetrahydrofolate + NADP(+) = (6R)-5,10-methenyltetrahydrofolate + NADPH. It carries out the reaction (6R)-5,10-methenyltetrahydrofolate + H2O = (6R)-10-formyltetrahydrofolate + H(+). It participates in one-carbon metabolism; tetrahydrofolate interconversion. Its function is as follows. Catalyzes the oxidation of 5,10-methylenetetrahydrofolate to 5,10-methenyltetrahydrofolate and then the hydrolysis of 5,10-methenyltetrahydrofolate to 10-formyltetrahydrofolate. The sequence is that of Bifunctional protein FolD from Actinobacillus pleuropneumoniae serotype 7 (strain AP76).